A 75-amino-acid polypeptide reads, in one-letter code: UPF0154 protein SERP0914 (75 aa).

Residues 3 to 23 (IWVAIILIVIALIAGLIGGFL) traverse the membrane as a helical segment.

This sequence belongs to the UPF0154 family.

It is found in the membrane. This is UPF0154 protein SERP0914 from Staphylococcus epidermidis (strain ATCC 35984 / DSM 28319 / BCRC 17069 / CCUG 31568 / BM 3577 / RP62A).